The chain runs to 643 residues: uncharacterized protein (643 aa).

The tract at residues 561 to 643 (LNQELETSSE…GADRKKRGVY (83 aa)) is disordered. The span at 591 to 606 (SRGGRGGRGARGGNRG) shows a compositional bias: gly residues. The span at 617 to 635 (GHDRQMKEKHKSDIKQRGA) shows a compositional bias: basic and acidic residues.

This is an uncharacterized protein from Caenorhabditis elegans.